Reading from the N-terminus, the 414-residue chain is Alanine--glyoxylate aminotransferase (414 aa).

Residues M1–M23 constitute a mitochondrion transit peptide. K231 bears the N6-(pyridoxal phosphate)lysine mark. An N6-acetyllysine; alternate modification is found at K247. K247 is modified (N6-succinyllysine; alternate). N6-acetyllysine is present on residues K256 and K334. R382 serves as a coordination point for substrate. Positions N412–L414 match the Microbody targeting signal motif.

It belongs to the class-V pyridoxal-phosphate-dependent aminotransferase family. In terms of assembly, homodimer. Pyridoxal 5'-phosphate is required as a cofactor.

The protein localises to the peroxisome. It localises to the mitochondrion matrix. It carries out the reaction L-serine + pyruvate = 3-hydroxypyruvate + L-alanine. The enzyme catalyses glyoxylate + L-alanine = glycine + pyruvate. Catalyzes the transamination of glyoxylate to glycine and contributes to the glyoxylate detoxification. In terms of biological role, catalyzes the transamination between L-serine and pyruvate and weakly contributes to gluconeogenesis from the L-serine metabolism. In Rattus norvegicus (Rat), this protein is Alanine--glyoxylate aminotransferase.